The following is a 199-amino-acid chain: Probable chemoreceptor glutamine deamidase CheD (199 aa).

The protein belongs to the CheD family.

It carries out the reaction L-glutaminyl-[protein] + H2O = L-glutamyl-[protein] + NH4(+). Probably deamidates glutamine residues to glutamate on methyl-accepting chemotaxis receptors (MCPs), playing an important role in chemotaxis. The polypeptide is Probable chemoreceptor glutamine deamidase CheD (Cereibacter sphaeroides (strain ATCC 17025 / ATH 2.4.3) (Rhodobacter sphaeroides)).